The sequence spans 73 residues: uncharacterized protein (73 aa).

The protein belongs to the asfivirus DP63R family.

This is an uncharacterized protein from Ornithodoros (relapsing fever ticks).